The following is a 179-amino-acid chain: Protein GrpE (179 aa).

The interval 1–20 (MSEETKEEIKNEKVDEEVTE) is disordered.

Belongs to the GrpE family. Homodimer.

Its subcellular location is the cytoplasm. Participates actively in the response to hyperosmotic and heat shock by preventing the aggregation of stress-denatured proteins, in association with DnaK and GrpE. It is the nucleotide exchange factor for DnaK and may function as a thermosensor. Unfolded proteins bind initially to DnaJ; upon interaction with the DnaJ-bound protein, DnaK hydrolyzes its bound ATP, resulting in the formation of a stable complex. GrpE releases ADP from DnaK; ATP binding to DnaK triggers the release of the substrate protein, thus completing the reaction cycle. Several rounds of ATP-dependent interactions between DnaJ, DnaK and GrpE are required for fully efficient folding. This chain is Protein GrpE, found in Lactococcus lactis subsp. lactis (strain IL1403) (Streptococcus lactis).